A 233-amino-acid polypeptide reads, in one-letter code: Nuclear speckle RNA-binding protein A (233 aa).

Disordered regions lie at residues 1 to 54, 68 to 92, and 214 to 233; these read MADG…VPDT, VQSG…GGNV, and FLRL…RGRR. Residues 71–91 show a composition bias toward gly residues; that stretch reads GEGGSVSMGRSGGGGGGGGGN. In terms of domain architecture, RRM spans 136 to 222; it reads NTLYVEGLPS…KFLRLQFSRK (87 aa).

As to expression, expressed in root meristems, lateral root primordia and root vascular tissues.

Its subcellular location is the nucleus speckle. Alternative splicing (AS) regulator that binds to specific mRNAs and modulates auxin effects on the transcriptome. Displaced from its targets upon binding to AS competitor long non-coding RNA (ASCO-RNA). This chain is Nuclear speckle RNA-binding protein A, found in Arabidopsis thaliana (Mouse-ear cress).